The sequence spans 253 residues: Sec-independent protein translocase protein TatC (253 aa).

6 helical membrane-spanning segments follow: residues 18–38 (VSVG…KSIF), 69–89 (AIVI…APGL), 96–116 (VILP…AFSY), 151–171 (LILG…LAKV), 187–207 (IVVI…SQIF), and 208–228 (MALP…MVNP). Positions 231 to 253 (KDNENNNENNNENNTKENTKSES) are disordered. Residues 244–253 (NTKENTKSES) show a composition bias toward basic and acidic residues.

Belongs to the TatC family. As to quaternary structure, the Tat system comprises two distinct complexes: a TatABC complex, containing multiple copies of TatA, TatB and TatC subunits, and a separate TatA complex, containing only TatA subunits. Substrates initially bind to the TatABC complex, which probably triggers association of the separate TatA complex to form the active translocon.

The protein resides in the cell inner membrane. In terms of biological role, part of the twin-arginine translocation (Tat) system that transports large folded proteins containing a characteristic twin-arginine motif in their signal peptide across membranes. Together with TatB, TatC is part of a receptor directly interacting with Tat signal peptides. The protein is Sec-independent protein translocase protein TatC of Helicobacter pylori (strain ATCC 700392 / 26695) (Campylobacter pylori).